Here is a 25-residue protein sequence, read N- to C-terminus: Caerin-1.17 (25 aa).

Leucine 25 is modified (leucine amide).

It belongs to the frog skin active peptide (FSAP) family. Caerin subfamily. Expressed by the skin dorsal glands.

The protein resides in the secreted. In terms of biological role, caerin-1.17 shows significant activity against Gram-positive organisms, but is less effective against Gram-negative organisms. This chain is Caerin-1.17, found in Ranoidea gracilenta (Dainty green tree frog).